Here is a 329-residue protein sequence, read N- to C-terminus: Replication factor C small subunit 1 (329 aa).

44–51 is a binding site for ATP; sequence GPPGTGKT.

This sequence belongs to the activator 1 small subunits family. RfcS subfamily. Heteromultimer composed of small subunits (RfcS) and large subunits (RfcL).

In terms of biological role, part of the RFC clamp loader complex which loads the PCNA sliding clamp onto DNA. This is Replication factor C small subunit 1 from Pyrobaculum islandicum (strain DSM 4184 / JCM 9189 / GEO3).